We begin with the raw amino-acid sequence, 271 residues long: Indole-3-glycerol phosphate synthase (271 aa).

The protein belongs to the TrpC family.

It carries out the reaction 1-(2-carboxyphenylamino)-1-deoxy-D-ribulose 5-phosphate + H(+) = (1S,2R)-1-C-(indol-3-yl)glycerol 3-phosphate + CO2 + H2O. It functions in the pathway amino-acid biosynthesis; L-tryptophan biosynthesis; L-tryptophan from chorismate: step 4/5. The protein is Indole-3-glycerol phosphate synthase of Lachnoclostridium phytofermentans (strain ATCC 700394 / DSM 18823 / ISDg) (Clostridium phytofermentans).